Reading from the N-terminus, the 268-residue chain is NAD kinase (268 aa).

Asp45 acts as the Proton acceptor in catalysis. NAD(+) is bound by residues 45–46, 122–123, Arg148, Asp150, 161–166, Ala185, and Gln223; these read DG, NE, and TAYGKS.

This sequence belongs to the NAD kinase family. The cofactor is a divalent metal cation.

It localises to the cytoplasm. The enzyme catalyses NAD(+) + ATP = ADP + NADP(+) + H(+). Functionally, involved in the regulation of the intracellular balance of NAD and NADP, and is a key enzyme in the biosynthesis of NADP. Catalyzes specifically the phosphorylation on 2'-hydroxyl of the adenosine moiety of NAD to yield NADP. The chain is NAD kinase from Latilactobacillus sakei subsp. sakei (strain 23K) (Lactobacillus sakei subsp. sakei).